A 156-amino-acid chain; its full sequence is Snaclec A1 (156 aa).

Residues 1–23 (MGRSISVSFGLLVVFLSLSGTGA) form the signal peptide. Disulfide bonds link Cys-27–Cys-38, Cys-55–Cys-154, and Cys-129–Cys-146. One can recognise a C-type lectin domain in the interval 34 to 155 (HEGHCYKVFN…CGQPYRFTCE (122 aa)).

The protein belongs to the snaclec family. Heterodimer; disulfide-linked. As to expression, expressed by the venom gland.

The protein resides in the secreted. Its function is as follows. Interferes with one step of hemostasis (modulation of platelet aggregation, or coagulation cascade, for example). This Macrovipera lebetinus (Levantine viper) protein is Snaclec A1.